Reading from the N-terminus, the 934-residue chain is Protein translocase subunit SecA (934 aa).

ATP contacts are provided by residues glutamine 87, 105 to 109 (GEGKT), and aspartate 515. The Zn(2+) site is built by cysteine 918, cysteine 920, cysteine 929, and histidine 930.

It belongs to the SecA family. As to quaternary structure, monomer and homodimer. Part of the essential Sec protein translocation apparatus which comprises SecA, SecYEG and auxiliary proteins SecDF-YajC and YidC. Requires Zn(2+) as cofactor.

The protein localises to the cell inner membrane. Its subcellular location is the cytoplasm. The catalysed reaction is ATP + H2O + cellular proteinSide 1 = ADP + phosphate + cellular proteinSide 2.. In terms of biological role, part of the Sec protein translocase complex. Interacts with the SecYEG preprotein conducting channel. Has a central role in coupling the hydrolysis of ATP to the transfer of proteins into and across the cell membrane, serving both as a receptor for the preprotein-SecB complex and as an ATP-driven molecular motor driving the stepwise translocation of polypeptide chains across the membrane. This chain is Protein translocase subunit SecA, found in Ralstonia pickettii (strain 12J).